The sequence spans 290 residues: Sporulation-specific protease YabG (290 aa).

Belongs to the peptidase U57 family.

The protein resides in the forespore outer membrane. In terms of biological role, cleaves the spore coat proteins SpoIVA and SafA. May cooperate with tgl to mediate the temperature-dependent cross-linking of coat proteins like GerQ. The chain is Sporulation-specific protease YabG (yabG) from Bacillus subtilis (strain 168).